The chain runs to 4171 residues: Cytoplasmic dynein 2 heavy chain 1 (4171 aa).

The segment at 1–1598 is stem; it reads MSSDSKDQRK…VLRQVSSEFE (1598 aa). An ATP-binding site is contributed by 115–122; that stretch reads GKELTEGN. Coiled-coil stretches lie at residues 164–203, 629–693, 829–861, 927–1048, and 1354–1383; these read ANDY…CDEL, KQLE…KEEE, DLEE…AERL, EIAE…KEKR, and SRQS…LEQK. AAA stretches follow at residues 1599-1823, 1883-2100, 2184-2432, and 2527-2767; these read YTYE…VLGG, EPLG…VRSH, VTKE…WVVS, and RFAF…PIKY. ATP contacts are provided by residues 1637–1644, 1921–1928, 2226–2233, and 2565–2572; these read GPAGTGKT, GAAGSGKS, GTTGCGKQ, and GRPGFGRR. The segment at 2776–3064 is stalk; it reads QLLGYKRLTL…VDLDREQDTI (289 aa). 3 coiled-coil regions span residues 2790 to 2877, 2999 to 3059, and 3308 to 3336; these read ERLK…KEVQ, EKIA…DLDR, and ELEE…LLLQ. AAA regions lie at residues 3140-3367 and 3575-3784; these read ASLE…IITK and LMDF…FVEQ.

This sequence belongs to the dynein heavy chain family. As to quaternary structure, the cytoplasmic dynein complex 2 is probably composed by a heavy chain che-3 homodimer and a number of light intermediate chains.

The protein localises to the cell projection. It is found in the cilium membrane. It localises to the cytoplasm. The protein resides in the cytoskeleton. Functions as a motor for intraflagellar retrograde transport in chemosensory neurons. Functions in cilia biogenesis. The chain is Cytoplasmic dynein 2 heavy chain 1 from Caenorhabditis elegans.